The chain runs to 416 residues: Lipase A (416 aa).

The signal sequence occupies residues 1-32 (MRLAPQKPLLLSTVLHLLLSIWMLGFASLAGA). Disulfide bonds link Cys67–Cys391 and Cys177–Cys180. N-linked (GlcNAc...) asparagine glycosylation occurs at Asn179. The active-site Nucleophile is the Ser219. Catalysis depends on charge relay system residues Asp287 and His381.

It belongs to the AB hydrolase superfamily. Lipase family. Post-translationally, glycosylated.

Its subcellular location is the secreted. It catalyses the reaction Deacetylation of xylans and xylo-oligosaccharides.. The catalysed reaction is a triacylglycerol + H2O = a diacylglycerol + a fatty acid + H(+). Its function is as follows. Lipolytic enzyme that possesses both lipase and acetylxylan esterase activity. Active towards p-nitrophenol esters of various carbon chain length with preference for medium-chain fatty acids (C-8). Also highly active on the acetylated compounds xylose tetra-acetate and oat spelt xylan. The chain is Lipase A from Sodiomyces alcalophilus (Acremonium alcalophilum).